The following is a 289-amino-acid chain: Probable aquaporin PIP2-6 (289 aa).

Methionine 1 is modified (N-acetylmethionine). Residues 1 to 38 are Cytoplasmic-facing; that stretch reads MTKDELTEEESLSGKDYLDPPPVKTFEVRELKKWSFYR. Threonine 7 is subject to Phosphothreonine. Serine 11 is modified (phosphoserine). A helical membrane pass occupies residues 39-59; the sequence is AVIAEFIATLLFLYVTVLTVI. Topologically, residues 60 to 80 are extracellular; the sequence is GFKSQTDINAGGGACASVGLL. A helical transmembrane segment spans residues 81 to 101; sequence GISWAFGGMIFILVYCTAGIS. The Cytoplasmic portion of the chain corresponds to 102 to 124; it reads GGHINPAVTFGLFLASKVSLVRA. An NPA 1 motif is present at residues 106-108; sequence NPA. The helical transmembrane segment at 125 to 145 threads the bilayer; it reads VSYMVAQCLGATCGVGLVKVF. The Extracellular portion of the chain corresponds to 146–165; it reads QSTYYNRYGGGANMLSDGYN. Residues 166–186 traverse the membrane as a helical segment; sequence VGVGVGAEIIGTFVLVYTVFS. Over 187–200 the chain is Cytoplasmic; sequence ATDPKRNARDSHIP. Residues 201 to 221 traverse the membrane as a helical segment; the sequence is VLAPLPIGFSVFMVHLATIPI. Topologically, residues 222-248 are extracellular; sequence TGTGINPARSFGAAVIYNNQKAWDDQW. Residues 227–229 carry the NPA 2 motif; sequence NPA. The chain crosses the membrane as a helical span at residues 249–269; sequence IFWVGPFVGAAIAAFYHQFVL. Residues 270–289 are Cytoplasmic-facing; the sequence is RAGAMKAYGSVRSQLHELHA. Serine 279 and serine 282 each carry phosphoserine.

Belongs to the MIP/aquaporin (TC 1.A.8) family. PIP (TC 1.A.8.11) subfamily. As to expression, expressed above ground, and in flower buds.

Its subcellular location is the cell membrane. In terms of biological role, aquaporins facilitate the transport of water and small neutral solutes across cell membranes. The protein is Probable aquaporin PIP2-6 (PIP2-6) of Arabidopsis thaliana (Mouse-ear cress).